Consider the following 215-residue polypeptide: uncharacterized protein (215 aa).

Disordered stretches follow at residues Met1–Arg144 and Ile156–Ala215. Low complexity-rich tracts occupy residues Ala16–Thr29, Ser49–Lys58, Ser85–Arg96, and Ser104–Pro127.

This is an uncharacterized protein from Homo sapiens (Human).